The sequence spans 113 residues: Large ribosomal subunit protein bL19 (113 aa).

It belongs to the bacterial ribosomal protein bL19 family.

In terms of biological role, this protein is located at the 30S-50S ribosomal subunit interface and may play a role in the structure and function of the aminoacyl-tRNA binding site. This Natranaerobius thermophilus (strain ATCC BAA-1301 / DSM 18059 / JW/NM-WN-LF) protein is Large ribosomal subunit protein bL19.